Reading from the N-terminus, the 408-residue chain is Ribosomal RNA large subunit methyltransferase DR_0049 (408 aa).

The protein belongs to the methyltransferase superfamily.

It carries out the reaction cytidine(2499) in 23S rRNA + S-adenosyl-L-methionine = 5-methylcytidine(2499) in 23S rRNA + S-adenosyl-L-homocysteine + H(+). Functionally, specifically methylates the cytosine at position 2499 (m5C2499) of 23S rRNA. The sequence is that of Ribosomal RNA large subunit methyltransferase DR_0049 from Deinococcus radiodurans (strain ATCC 13939 / DSM 20539 / JCM 16871 / CCUG 27074 / LMG 4051 / NBRC 15346 / NCIMB 9279 / VKM B-1422 / R1).